Consider the following 62-residue polypeptide: Guanine nucleotide-binding protein subunit gamma (62 aa).

Positions 40-62 (DMLVSGPTDQHNPFQEKKSCSVL) are disordered. The span at 53-62 (FQEKKSCSVL) shows a compositional bias: basic and acidic residues. Cys59 bears the Cysteine methyl ester mark. A lipid anchor (S-geranylgeranyl cysteine) is attached at Cys59. The propeptide at 60-62 (SVL) is removed in mature form.

This sequence belongs to the G protein gamma family. In terms of assembly, g proteins are composed of 3 units, alpha, beta and gamma. Interacts with gpb-1 and gpb-2. As to expression, predominantly expressed in the central nervous system.

It is found in the cell membrane. In terms of biological role, guanine nucleotide-binding proteins (G proteins) are involved as a modulator or transducer in various transmembrane signaling systems. The beta and gamma chains are required for the GTPase activity, for replacement of GDP by GTP, and for G protein-effector interaction. The protein is Guanine nucleotide-binding protein subunit gamma (gpc-1) of Caenorhabditis elegans.